Reading from the N-terminus, the 436-residue chain is Glutamyl-tRNA reductase (436 aa).

Substrate-binding positions include 49 to 52 (TCNR), S109, 114 to 116 (EGQ), and Q120. Catalysis depends on C50, which acts as the Nucleophile. Position 198–203 (198–203 (GAGRMS)) interacts with NADP(+).

It belongs to the glutamyl-tRNA reductase family. In terms of assembly, homodimer.

It carries out the reaction (S)-4-amino-5-oxopentanoate + tRNA(Glu) + NADP(+) = L-glutamyl-tRNA(Glu) + NADPH + H(+). Its pathway is porphyrin-containing compound metabolism; protoporphyrin-IX biosynthesis; 5-aminolevulinate from L-glutamyl-tRNA(Glu): step 1/2. The protein operates within porphyrin-containing compound metabolism; chlorophyll biosynthesis. In terms of biological role, catalyzes the NADPH-dependent reduction of glutamyl-tRNA(Glu) to glutamate 1-semialdehyde (GSA). In Prochlorococcus marinus (strain MIT 9215), this protein is Glutamyl-tRNA reductase.